A 145-amino-acid chain; its full sequence is MNLVQLGKLHENVLDAGCEPNRNARYLASLGYKVVGIDISERAISKAIDKTSSEKSNVNFNQRDFSRLNEFKGHFDTVIDIGCFHSILNSDHEPYTASLSHICHSDSSVFLRAFSETNKSRYRRWQGHKRYSLALKRNNVKKLSL.

This sequence belongs to the methyltransferase superfamily.

Probable methyltransferase. This is an uncharacterized protein from Schizosaccharomyces pombe (strain 972 / ATCC 24843) (Fission yeast).